Here is a 152-residue protein sequence, read N- to C-terminus: Ribosome maturation factor RimP (152 aa).

This sequence belongs to the RimP family.

The protein localises to the cytoplasm. In terms of biological role, required for maturation of 30S ribosomal subunits. This Burkholderia cenocepacia (strain ATCC BAA-245 / DSM 16553 / LMG 16656 / NCTC 13227 / J2315 / CF5610) (Burkholderia cepacia (strain J2315)) protein is Ribosome maturation factor RimP.